Reading from the N-terminus, the 279-residue chain is High choriolytic enzyme 2 (279 aa).

Positions 1–20 are cleaved as a signal peptide; the sequence is MNLASSACLLLLFLLGIAQA. A propeptide spans 21–79 (activation peptide); sequence LPVQNEEGHEEGNKEGHGEEGVEEGDEDDFVDFTTRILTSNNNTDQLLLEGDLVAPTNR. A compositionally biased stretch (basic and acidic residues) spans 26–40; the sequence is EEGHEEGNKEGHGEE. The tract at residues 26-46 is disordered; it reads EEGHEEGNKEGHGEEGVEEGD. N-linked (GlcNAc...) asparagine glycosylation occurs at asparagine 62. One can recognise a Peptidase M12A domain in the interval 80-279; sequence NAMKCWYNSC…TRSNVLYNCR (200 aa). Disulfide bonds link cysteine 84/cysteine 89, cysteine 129/cysteine 278, and cysteine 150/cysteine 170. Histidine 178 is a binding site for Zn(2+). The active site involves glutamate 179. Zn(2+) contacts are provided by histidine 182 and histidine 188.

Requires Zn(2+) as cofactor.

It is found in the zymogen granule. It carries out the reaction Hydrolysis of the inner layer of fish egg envelope. Also hydrolysis of casein and small molecule substrates such as succinyl-Leu-Leu-Val-Tyr-|-7-(4-methyl)coumarylamide.. Participates in the breakdown of the egg envelope, which is derived from the egg extracellular matrix, at the time of hatching. Thus allowing the newly hatched fish to swim free. HCE binds tightly to the egg envelope while it exerts the choriolytic swelling action. The sequence is that of High choriolytic enzyme 2 (hceb) from Oryzias latipes (Japanese rice fish).